A 162-amino-acid polypeptide reads, in one-letter code: Transcription antitermination protein NusB (162 aa).

It belongs to the NusB family.

Functionally, involved in transcription antitermination. Required for transcription of ribosomal RNA (rRNA) genes. Binds specifically to the boxA antiterminator sequence of the ribosomal RNA (rrn) operons. This is Transcription antitermination protein NusB from Xanthomonas euvesicatoria pv. vesicatoria (strain 85-10) (Xanthomonas campestris pv. vesicatoria).